The sequence spans 329 residues: NAD kinase (329 aa).

A disordered region spans residues 1 to 26 (MTTPGTDHNADQGADSGDKATKAASG). D104 serves as the catalytic Proton acceptor. NAD(+)-binding positions include 104–105 (DG), R109, 179–180 (NE), D209, and 220–225 (TAYAFS).

Belongs to the NAD kinase family. Requires a divalent metal cation as cofactor.

It localises to the cytoplasm. The enzyme catalyses NAD(+) + ATP = ADP + NADP(+) + H(+). In terms of biological role, involved in the regulation of the intracellular balance of NAD and NADP, and is a key enzyme in the biosynthesis of NADP. Catalyzes specifically the phosphorylation on 2'-hydroxyl of the adenosine moiety of NAD to yield NADP. This chain is NAD kinase, found in Corynebacterium jeikeium (strain K411).